The chain runs to 53 residues: uncharacterized protein (53 aa).

This is an uncharacterized protein from Bacillus subtilis (strain 168).